Consider the following 2845-residue polypeptide: MAAASYDQLLKQVEALKMENSNLRQELEDNSNHLTKLETEASNMKEVLKQLQGSIEDETMTSGQIDLLERLKEFNLDSNFPGVKLRSKMSLRSYGSREGSVSSRSGECSPVPMGSFPRRTFVNGSRESTGYLEELEKERSLLLADLDKEEKEKDWYYAQLQNLTKRIDSLPLTENFSLQTDMTRRQLEYEARQIRAAMEEQLGTCQDMEKRAQRRIARIQQIEKDILRVRQLLQSQAAEAERSSQSRHDAASHEAGRQHEGHGVAESNTAASSSGQSPATRVDHETASVLSSSGTHSAPRRLTSHLGTKVEMVYSLLSMLGTHDKDDMSRTLLAMSSSQDSCISMRQSGCLPLLIQLLHGNDKDSVLLGNSRGSKEARARASAALHNIIHSQPDDKRGRREIRVLHLLEQIRAYCETCWEWQEAHEQGMDQDKNPMPAPVEHQICPAVCVLMKLSFDEEHRHAMNELGGLQAIAELLQVDCEMYGLTNDHYSVTLRRYAGMALTNLTFGDVANKATLCSMKGCMRALVAQLKSESEDLQQVIASVLRNLSWRADVNSKKTLREVGSVKALMECALEVKKESTLKSVLSALWNLSAHCTENKADICAVDGALAFLVGTLTYRSQTNTLAIIESGGGILRNVSSLIATNEDHRQILRENNCLQTLLQHLKSHSLTIVSNACGTLWNLSARNPKDQEALWDMGAVSMLKNLIHSKHKMIAMGSAAALRNLMANRPAKYKDANIMSPGSSLPSLHVRKQKALEAELDAQHLSETFDNIDNLSPKASHRSKQRHKQNLYGDYAFDANRHDDSRSDNFNTGNMTVLSPYLNTTVLPSSSSSRGSLDSSRSEKDRSLERERGIGLSAYHPTTENAGTSSKRGLQITTTAAQIAKVMEEVSAIHTSQDDRSSASTTEFHCVADDRSAARRSSASHTHSNTYNFTKSENSNRTCSMPYAKVEYKRSSNDSLNSVTSSDGYGKRGQMKPSVESYSEDDESKFCSYGQYPADLAHKIHSANHMDDNDGELDTPINYSLKYSDEQLNSGRQSPSQNERWARPKHVIEDEIKQNEQRQARSQNTSYPVYSENTDDKHLKFQPHFGQQECVSPYRSRGTSGSETNRMGSSHAINQNVNQSLCQEDDYEDDKPTNYSERYSEEEQHEEEEERPTNYSIKYNEEKHHVDQPIDYSLKYATDISSSQKPSFSFSKNSSAQSTKPEHLSPSSENTAVPPSNAKRQNQLRPSSAQRNGQTQKGTTCKVPSINQETIQTYCVEDTPICFSRCSSLSSLSSADDEIGCDQTTQEADSANTLQTAEVKENDVTRSAEDPATEVPAVSQNARAKPSRLQASGLSSESTRHNKAVEFSSGAKSPSKSGAQTPKSPPEHYVQETPLVFSRCTSVSSLDSFESRSIASSVQSEPCSGMVSGIISPSDLPDSPGQTMPPSRSKTPPPPPQTVQAKREVPKSKVPAAEKRESGPKQTAVNAAVQRVQVLPDVDTLLHFATESTPDGFSCSSSLSALSLDEPFIQKDVELRIMPPVQENDNGNETESEQPEESNENQDKEVEKPDSEKDLLDDSDDDDIEILEECIISAMPTKSSRKAKKLAQTASKLPPPVARKPSQLPVYKLLPAQNRLQAQKHVSFTPGDDVPRVYCVEGTPINFSTATSLSDLTIESPPNELATGDGVRAGIQSGEFEKRDTIPTEGRSTDDAQRGKISSIVTPDLDDNKAEEGDILAECINSAMPKGKSHKPFRVKKIMDQVQQASSTSSGANKNQVDTKKKKPTSPVKPMPQNTEYRTRVRKNTDSKVNVNTEETFSDNKDSKKPSLQTNAKAFNEKLPNNEDRVRGTFALDSPHHYTPIEGTPYCFSRNDSLSSLDFDDDDVDLSREKAELRKGKESKDSEAKVTCRPEPNSSQQAASKSQASIKHPANRAQSKPVLQKQPTFPQSSKDGPDRGAATDEKLQNLAIENTPVCFSRNSSLSSLSDIDQENNNNKESEPIKEAEPANSQGEPSKPQASGYAPKSFHVEDTPVCFSRNSSLSSLSIDSEDDLLQECISSAMPKKKRPSRLKSESEKQSPRKVGGILAEDLTLDLKDLQRPDSEHAFSPGSENFDWKAIQEGANSIVSSLHQAAAAAACLSRQASSDSDSILSLKSGISLGSPFHLTPDQEEKPFTSNKGPRILKPGEKSTLEAKKIESENKGIKGGKKVYKSLITGKIRSNSEISSQMKQPLPTNMPSISRGRTMIHIPGLRNSSSSTSPVSKKGPPLKTPASKSPSEGPGATTSPRGTKPAGKSELSPITRQTSQISGSNKGSSRSGSRDSTPSRPTQQPLSRPMQSPGRNSISPGRNGISPPNKLSQLPRTSSPSTASTKSSGSGKMSYTSPGRQLSQQNLTKQASLSKNASSIPRSESASKGLNQMSNGNGSNKKVELSRMSSTKSSGSESDSSERPALVRQSTFIKEAPSPTLRRKLEESASFESLSPSSRPDSPTRSQAQTPVLSPSLPDMSLSTHPSVQAGGWRKLPPNLSPTIEYNDGRPTKRHDIARSHSESPSRLPINRAGTWKREHSKHSSSLPRVSTWRRTGSSSSILSASSESSEKAKSEDERHVSSMPAPRQMKENQVPTKGTWRKIKESDISPTGMASQSASSGAASGAESKPLIYQMAPPVSKTEDVWVRIEDCPINNPRSGRSPTGNTPPVIDSVSEKGSSSIKDSKDSKDTHGKQSVGSGSPVQTVGLETRLNSFVQVEAPEQKGTEAKPGQSNPVSIAETAETCIAERTPFSSSSSSKHSSPSGTVAARVTPFNYNPSPRKSSADSTSARPSQIPTPVSTNTKKRDSKTDITESSGAQSPKRHSGSYLVTSV.

A2 carries the N-acetylalanine modification. Positions 2–61 (AAASYDQLLKQVEALKMENSNLRQELEDNSNHLTKLETEASNMKEVLKQLQGSIEDETMT) form a coiled coil. Phosphoserine occurs at positions 105 and 109. The stretch at 125 to 245 (SRESTGYLEE…QAAEAERSSQ (121 aa)) forms a coiled coil. The tract at residues 238–304 (AEAERSSQSR…THSAPRRLTS (67 aa)) is disordered. Residues 239–263 (EAERSSQSRHDAASHEAGRQHEGHG) are compositionally biased toward basic and acidic residues. A compositionally biased stretch (polar residues) spans 266–279 (ESNTAASSSGQSPA). ARM repeat units lie at residues 451–493 (LMKL…HYSV), 503–545 (LTNL…IASV), 546–589 (LRNL…VLSA), 590–636 (LWNL…GGGI), 637–681 (LRNV…ACGT), 682–723 (LWNL…SAAA), and 724–765 (LRNL…LDAQ). S742, S746, and S778 each carry phosphoserine. A disordered region spans residues 828-873 (VLPSSSSSRGSLDSSRSEKDRSLERERGIGLSAYHPTTENAGTSSK). A compositionally biased stretch (low complexity) spans 831–841 (SSSSSRGSLDS). Positions 842-855 (SRSEKDRSLERERG) are enriched in basic and acidic residues. Residues 862–873 (HPTTENAGTSSK) show a composition bias toward polar residues. The residue at position 906 (S906) is a Phosphoserine. Disordered regions lie at residues 921 to 942 (RRSS…ENSN) and 956 to 986 (RSSN…SYSE). A compositionally biased stretch (polar residues) spans 927 to 942 (HTHSNTYNFTKSENSN). Residues 959–969 (NDSLNSVTSSD) are compositionally biased toward low complexity. Phosphoserine is present on residues S985, S1036, and S1040. The segment at 1018–1168 (ELDTPINYSL…TNYSIKYNEE (151 aa)) is interaction with catenins. Disordered stretches follow at residues 1058–1079 (IKQN…YSEN), 1092–1168 (GQQE…YNEE), 1189–1247 (SQKP…GTTC), and 1307–1375 (ENDV…PEHY). Composition is skewed to polar residues over residues 1066-1078 (ARSQ…VYSE) and 1103-1128 (RGTS…QSLC). Residues 1189–1204 (SQKPSFSFSKNSSAQS) are compositionally biased toward low complexity. Polar residues predominate over residues 1211–1245 (SPSSENTAVPPSNAKRQNQLRPSSAQRNGQTQKGT). Positions 1354-1365 (SSGAKSPSKSGA) are enriched in low complexity. Phosphoserine occurs at positions 1359, 1370, 1384, 1391, and 1394. Disordered stretches follow at residues 1400–1474 (IASS…VNAA), 1525–1568 (PPVQ…SDDD), 1587–1606 (RKAK…VARK), 1746–2010 (DQVQ…APKS), and 2042–2069 (ISSA…KVGG). At T1437 the chain carries Phosphothreonine. The segment covering 1447 to 1465 (AKREVPKSKVPAAEKRESG) has biased composition (basic and acidic residues). Positions 1532-1546 (NGNETESEQPEESNE) are enriched in acidic residues. Residues 1547 to 1562 (NQDKEVEKPDSEKDLL) are compositionally biased toward basic and acidic residues. S1565 is subject to Phosphoserine. The span at 1747-1762 (QVQQASSTSSGANKNQ) shows a compositional bias: polar residues. S1772 is modified (phosphoserine). The segment covering 1783–1792 (YRTRVRKNTD) has biased composition (basic and acidic residues). Phosphoserine occurs at positions 1859, 1861, and 1862. The interval 1864–1891 (DFDDDDVDLSREKAELRKGKESKDSEAK) is highly charged. A compositionally biased stretch (basic and acidic residues) spans 1871-1894 (DLSREKAELRKGKESKDSEAKVTC). Residues 1900 to 1911 (SSQQAASKSQAS) show a composition bias toward low complexity. Polar residues predominate over residues 1927-1936 (KQPTFPQSSK). A compositionally biased stretch (basic and acidic residues) spans 1937-1949 (DGPDRGAATDEKL). Residues S1969 and S1971 each carry the phosphoserine modification. Residues 1979-1990 (NNKESEPIKEAE) show a composition bias toward basic and acidic residues. Residues 2034–2058 (EDDLLQECISSAMPKKKRPSRLKSE) are interaction with AXIN1. 6 positions are modified to phosphoserine: S2087, S2092, S2125, S2129, S2130, and S2132. Disordered stretches follow at residues 2146–2190 (SPFH…GIKG), 2202–2652 (KIRS…PPVS), and 2664–2845 (CPIN…VTSV). At T2151 the chain carries Phosphothreonine. Residues 2167–2674 (ILKPGEKSTL…PINNPRSGRS (508 aa)) form a basic region region. Residues 2169-2187 (KPGEKSTLEAKKIESENKG) show a composition bias toward basic and acidic residues. Composition is skewed to polar residues over residues 2203 to 2223 (IRSN…NMPS) and 2257 to 2272 (ASKS…TSPR). S2260, S2270, and S2283 each carry phosphoserine. The segment covering 2290–2311 (SQISGSNKGSSRSGSRDSTPSR) has biased composition (low complexity). The segment covering 2312–2331 (PTQQPLSRPMQSPGRNSISP) has biased composition (polar residues). Residues 2348 to 2369 (TSSPSTASTKSSGSGKMSYTSP) show a composition bias toward low complexity. Positions 2370 to 2411 (GRQLSQQNLTKQASLSKNASSIPRSESASKGLNQMSNGNGSN) are enriched in polar residues. Low complexity-rich tracts occupy residues 2417-2429 (SRMS…GSES) and 2459-2477 (SASF…PTRS). Phosphoserine is present on residues S2473 and S2535. Residues 2475 to 2845 (TRSQAQTPVL…HSGSYLVTSV (371 aa)) form an interaction with DLG1 region. The segment covering 2518 to 2535 (NDGRPTKRHDIARSHSES) has biased composition (basic and acidic residues). Residues 2555-2568 (SSSLPRVSTWRRTG) are compositionally biased toward polar residues. S2569 is modified (phosphoserine). The span at 2569-2579 (SSSSILSASSE) shows a compositional bias: low complexity. Positions 2580 to 2592 (SSEKAKSEDERHV) are enriched in basic and acidic residues. A compositionally biased stretch (low complexity) spans 2626 to 2638 (ASQSASSGAASGA). Residues 2668–2679 (NPRSGRSPTGNT) show a composition bias toward polar residues. S2671 and S2674 each carry phosphoserine. An interaction with MAPRE1 region spans residues 2674 to 2845 (SPTGNTPPVI…HSGSYLVTSV (172 aa)). T2679 carries the phosphothreonine modification. Low complexity predominate over residues 2684–2694 (DSVSEKGSSSI). Positions 2695–2705 (KDSKDSKDTHG) are enriched in basic and acidic residues. Polar residues predominate over residues 2706–2716 (KQSVGSGSPVQ). 2 positions are modified to phosphoserine: S2713 and S2726. The span at 2765-2776 (SSSSSSKHSSPS) shows a compositional bias: low complexity. Over residues 2786–2814 (FNYNPSPRKSSADSTSARPSQIPTPVSTN) the composition is skewed to polar residues. At S2791 the chain carries Phosphoserine. Positions 2805–2808 (SQIP) match the Microtubule tip localization signal motif. The PDZ-binding signature appears at 2843 to 2845 (TSV).

This sequence belongs to the adenomatous polyposis coli (APC) family. Forms homooligomers. Found in a complex consisting of ARHGEF4, APC and CTNNB1. Found in a complex composed of MACF1, APC, AXIN1, CTNNB1 and GSK3B. The complex composed, at least, of APC, CTNNB1 and GSK3B interacts with JPT1; the interaction requires the inactive form of GSK3B (phosphorylated at 'Ser-9'). Interacts with APC2. Interacts with DLG1 (via PDZ domains) and DLG3 (via PDZ domains). Interacts with alpha- and beta-catenins. Interacts with AXIN1 (via RGS domain). Interacts with ARHGEF4 (via N-terminus). Interacts (via C-terminal residues 2674-2843) with MAPRE1 (via C-terminal residues 206-211); the interaction inhibits association with and bundling of F-actin. Interacts with MAPRE2 and MAPRE3 (via C-terminus). Interacts with DIAPH1; DIAPH1 acts as a scaffold protein for MAPRE1 and APC to stabilize microtubules and promote cell migration. Interacts with DIAPH2. Interacts with SCRIB; may mediate targeting to adherens junctions of epithelial cells. Interacts with SPATA13 (via N-terminus and SH3 domain). Interacts with ASAP1 (via SH3 domain). Interacts (at the cell membrane) with AMER1 and AMER2 (via ARM repeats). Interacts with KHDRBS1. Interacts with actin; binds both to F-actin and actin filament bundles. Phosphorylated; phosphorylation enhances the F-actin bundling activity. Phosphorylated by GSK3B. In terms of processing, ubiquitinated, leading to its degradation by the proteasome. Ubiquitination is facilitated by Axin. Deubiquitinated by ZRANB1/TRABID. In terms of tissue distribution, expressed in liver, spleen, kidney, heart, lung, brain, stomach, intestine, testis and ovary.

The protein resides in the cell junction. Its subcellular location is the adherens junction. It localises to the cytoplasm. The protein localises to the cytoskeleton. It is found in the cell projection. The protein resides in the lamellipodium. Its subcellular location is the ruffle membrane. It localises to the cell membrane. Its function is as follows. Tumor suppressor. Promotes rapid degradation of CTNNB1 and participates in Wnt signaling as a negative regulator. APC activity is correlated with its phosphorylation state. Activates the GEF activity of SPATA13 and ARHGEF4. Plays a role in hepatocyte growth factor (HGF)-induced cell migration. Required for MMP9 up-regulation via the JNK signaling pathway in colorectal tumor cells. Associates with both microtubules and actin filaments, components of the cytoskeleton. Plays a role in mediating the organization of F-actin into ordered bundles. Functions downstream of Rho GTPases and DIAPH1 to selectively stabilize microtubules. Acts as a mediator of ERBB2-dependent stabilization of microtubules at the cell cortex. It is required for the localization of MACF1 to the cell membrane and this localization of MACF1 is critical for its function in microtubule stabilization. The polypeptide is Adenomatous polyposis coli protein (Apc) (Mus musculus (Mouse)).